We begin with the raw amino-acid sequence, 36 residues long: Alpha-conotoxin-like Pu1.3 (36 aa).

The propeptide occupies 1-21 (SDGRNAGADRKGFGLISQMFK). Cystine bridges form between C24-C30 and C25-C36.

It belongs to the conotoxin A superfamily. Expressed by the venom duct.

The protein resides in the secreted. Functionally, alpha-conotoxins act on postsynaptic membranes, they bind to the nicotinic acetylcholine receptors (nAChR) and thus inhibit them. In Conus pulicarius (Flea-bitten cone), this protein is Alpha-conotoxin-like Pu1.3.